We begin with the raw amino-acid sequence, 66 residues long: Large ribosomal subunit protein bL35 (66 aa).

Basic residues predominate over residues 1 to 16; the sequence is MPKQKTHRASAKRFKR. The disordered stretch occupies residues 1 to 21; that stretch reads MPKQKTHRASAKRFKRTGNGG.

It belongs to the bacterial ribosomal protein bL35 family.

The polypeptide is Large ribosomal subunit protein bL35 (Lactococcus lactis subsp. cremoris (strain MG1363)).